We begin with the raw amino-acid sequence, 49 residues long: Small ribosomal subunit protein eS31 (49 aa).

4 residues coordinate Zn(2+): Cys21, Cys24, Cys39, and Cys42. Residues 21-42 form a C4-type zinc finger; that stretch reads CPRCGPGVFLADHKNRLACGKC.

It belongs to the eukaryotic ribosomal protein eS31 family. In terms of assembly, part of the 30S ribosomal subunit. Zn(2+) is required as a cofactor.

The polypeptide is Small ribosomal subunit protein eS31 (Methanosarcina mazei (strain ATCC BAA-159 / DSM 3647 / Goe1 / Go1 / JCM 11833 / OCM 88) (Methanosarcina frisia)).